Reading from the N-terminus, the 261-residue chain is Hydroxyethylthiazole kinase (261 aa).

Met38 provides a ligand contact to substrate. Residues Arg114 and Thr159 each contribute to the ATP site. Gly186 lines the substrate pocket.

Belongs to the Thz kinase family. The cofactor is Mg(2+).

The catalysed reaction is 5-(2-hydroxyethyl)-4-methylthiazole + ATP = 4-methyl-5-(2-phosphooxyethyl)-thiazole + ADP + H(+). It participates in cofactor biosynthesis; thiamine diphosphate biosynthesis; 4-methyl-5-(2-phosphoethyl)-thiazole from 5-(2-hydroxyethyl)-4-methylthiazole: step 1/1. Its function is as follows. Catalyzes the phosphorylation of the hydroxyl group of 4-methyl-5-beta-hydroxyethylthiazole (THZ). The protein is Hydroxyethylthiazole kinase of Halalkalibacterium halodurans (strain ATCC BAA-125 / DSM 18197 / FERM 7344 / JCM 9153 / C-125) (Bacillus halodurans).